The following is a 369-amino-acid chain: Tetraacyldisaccharide 4'-kinase (369 aa).

V68 to T75 is a binding site for ATP.

This sequence belongs to the LpxK family.

The catalysed reaction is a lipid A disaccharide + ATP = a lipid IVA + ADP + H(+). It functions in the pathway glycolipid biosynthesis; lipid IV(A) biosynthesis; lipid IV(A) from (3R)-3-hydroxytetradecanoyl-[acyl-carrier-protein] and UDP-N-acetyl-alpha-D-glucosamine: step 6/6. In terms of biological role, transfers the gamma-phosphate of ATP to the 4'-position of a tetraacyldisaccharide 1-phosphate intermediate (termed DS-1-P) to form tetraacyldisaccharide 1,4'-bis-phosphate (lipid IVA). The sequence is that of Tetraacyldisaccharide 4'-kinase from Chlamydia trachomatis serovar D (strain ATCC VR-885 / DSM 19411 / UW-3/Cx).